Reading from the N-terminus, the 944-residue chain is Protein unc-45 homolog A (944 aa).

Residues 1-25 (MTVSGPGTPEPRPSDPGASSAEELR) form a disordered region. 3 TPR repeats span residues 21 to 54 (AEEL…GATP), 58 to 91 (AILH…DGGD), and 92 to 125 (VKAL…EPKN). Lysine 70 bears the N6-acetyllysine mark. Lysine 483 bears the N6-acetyllysine mark.

As to quaternary structure, interacts with PGR isoforms A and B as well as with NR3C1 in the absence of ligand, and with HSP90AB1. Binding to HSP90AB1 involves 2 UNC45A monomers per HSP90AB1 dimer.

The protein localises to the cytoplasm. Its subcellular location is the perinuclear region. It is found in the nucleus. Functionally, may act as co-chaperone for HSP90 (Potential). Prevents the stimulation of HSP90AB1 ATPase activity by AHSA1. Positive factor in promoting PGR function in the cell. May be necessary for proper folding of myosin (Potential). Necessary for normal cell proliferation. Necessary for normal myotube formation and myosin accumulation during muscle cell development. May play a role in erythropoiesis in stroma cells in the spleen. The polypeptide is Protein unc-45 homolog A (Unc45a) (Rattus norvegicus (Rat)).